The following is a 259-amino-acid chain: 12alpha-hydroxysteroid dehydrogenase (259 aa).

Tyrosine 162 serves as the catalytic Proton acceptor.

It belongs to the short-chain dehydrogenases/reductases (SDR) family. Homotetramer.

It catalyses the reaction cholate + NADP(+) = 3alpha,7alpha-dihydroxy-12-oxo-5beta-cholanate + NADPH + H(+). The enzyme catalyses deoxycholate + NADP(+) = 12-dehydrodeoxycholate + NADPH + H(+). In terms of biological role, catalyzes the oxidation of the 12alpha-hydroxy group of bile acids, like cholate and deoxycholate. Is also able to catalyze the reverse reaction in vitro. Is likely involved in an epimerization pathway of bile acids that converts hydroxy groups from alpha to beta positions via stable oxo-intermediates, which occurs in the human gut. This Clostridium sp. (strain ATCC 29733 / VPI C48-50) protein is 12alpha-hydroxysteroid dehydrogenase.